The sequence spans 77 residues: Dermatoxin-S1 (77 aa).

The N-terminal stretch at 1 to 22 is a signal peptide; the sequence is MAFLKKSLFLILFLGLVPLSFC. The propeptide occupies 23 to 44; the sequence is ENDKREGENEEEQDDDQSEEKR. At Gln-76 the chain carries Glutamine amide.

Expressed by the skin glands.

It localises to the secreted. The protein resides in the target cell membrane. Its function is as follows. Antimicrobial peptide with potent activity against Gram-positive bacteria B.megaterium, C.glutamicum and S.aureus and mollicutes A.laidlawii and S.melliferum. Less active against Gram-negative bacteria B.cepacia, P.aeruginosa, S.typhimurium and S.meliloti. Probably acts by disturbing membrane functions with its amphipathic structure. In Phyllomedusa sauvagei (Sauvage's leaf frog), this protein is Dermatoxin-S1.